A 282-amino-acid polypeptide reads, in one-letter code: Cyanocobalamin reductase / alkylcobalamin dealkylase (282 aa).

Substrate contacts are provided by residues D104, 115–118 (ILAQ), 129–131 (YYQ), C149, and I160. Residues 234 to 282 (LGLAQPSEKPSSPSPDLPFTTPAPKKPGNPSRARSWLSPRVSPPASPGP) are disordered. S245, S247, S275, and S279 each carry phosphoserine.

It belongs to the MMACHC family. As to quaternary structure, monomer in the absence of bound substrate. Homodimer; dimerization is triggered by binding to FMN or adenosylcobalamin. Interacts with LMBRD1 and ABCD4; the interaction ensures the transport of cobalamin from the lysosome to the cytoplasm. Forms a multiprotein complex with MMADHC, MTR and MTRR; the interaction with MTR could modulate MMACHC-dependent processing of cobalamin. Heterodimer with MMADHC; the interaction might play a role in the regulation of the balance between AdoCbl and MeCbl synthesis. Requires FAD as cofactor. It depends on FMN as a cofactor. Widely expressed. Expressed at higher level in fetal liver. Also expressed in spleen, lymph node, thymus and bone marrow. Weakly or not expressed in peripheral blood leukocytes.

It is found in the cytoplasm. The protein resides in the cytosol. The catalysed reaction is 2 cob(II)alamin-[cyanocobalamin reductase] + 2 hydrogen cyanide + NADP(+) = 2 cyanocob(III)alamin + 2 apo-[cyanocobalamin reductase] + NADPH + H(+). It carries out the reaction apo-[alkylcobalamin reductase] + an R-cob(III)alamin + glutathione = cob(I)alamin-[alkylcobalamin reductase] + an S-substituted glutathione + H(+). The enzyme catalyses apo-[alkylcobalamin reductase] + methylcob(III)alamin + glutathione = S-methyl glutathione + cob(I)alamin-[alkylcobalamin reductase] + H(+). It catalyses the reaction apo-[alkylcobalamin reductase] + adenosylcob(III)alamin + glutathione = S-adenosylglutathione + cob(I)alamin-[alkylcobalamin reductase] + H(+). In terms of biological role, cobalamin (vitamin B12) cytosolic chaperone that catalyzes the reductive decyanation of cyanocob(III)alamin (cyanocobalamin, CNCbl) to yield cob(II)alamin and cyanide, using FAD or FMN as cofactors and NADPH as cosubstrate. Cyanocobalamin constitutes the inactive form of vitamin B12 introduced from the diet, and is converted into the active cofactors methylcobalamin (MeCbl) involved in methionine biosynthesis, and 5'-deoxyadenosylcobalamin (AdoCbl) involved in the TCA cycle. Forms a complex with the lysosomal transporter ABCD4 and its chaperone LMBRD1, to transport cobalamin across the lysosomal membrane into the cytosol. The processing of cobalamin in the cytosol occurs in a multiprotein complex composed of at least MMACHC, MMADHC, MTRR (methionine synthase reductase) and MTR (methionine synthase) which may contribute to shuttle safely and efficiently cobalamin towards MTR in order to produce methionine. Also acts as a glutathione transferase by catalyzing the dealkylation of the alkylcob(III)alamins MeCbl and AdoCbl, using the thiolate of glutathione for nucleophilic displacement to generate cob(I)alamin and the corresponding glutathione thioether. The conversion of incoming MeCbl or AdoCbl into a common intermediate cob(I)alamin is necessary to meet the cellular needs for both cofactors. Cysteine and homocysteine cannot substitute for glutathione in this reaction. This is Cyanocobalamin reductase / alkylcobalamin dealkylase from Homo sapiens (Human).